The primary structure comprises 620 residues: 1-deoxy-D-xylulose-5-phosphate synthase (620 aa).

Thiamine diphosphate-binding positions include His75 and 116–118 (AHS). Residue Asp147 participates in Mg(2+) binding. Thiamine diphosphate is bound by residues 148–149 (GA), Asn177, Tyr284, and Glu366. Asn177 is a binding site for Mg(2+).

The protein belongs to the transketolase family. DXPS subfamily. In terms of assembly, homodimer. It depends on Mg(2+) as a cofactor. The cofactor is thiamine diphosphate.

The catalysed reaction is D-glyceraldehyde 3-phosphate + pyruvate + H(+) = 1-deoxy-D-xylulose 5-phosphate + CO2. Its pathway is metabolic intermediate biosynthesis; 1-deoxy-D-xylulose 5-phosphate biosynthesis; 1-deoxy-D-xylulose 5-phosphate from D-glyceraldehyde 3-phosphate and pyruvate: step 1/1. Catalyzes the acyloin condensation reaction between C atoms 2 and 3 of pyruvate and glyceraldehyde 3-phosphate to yield 1-deoxy-D-xylulose-5-phosphate (DXP). This chain is 1-deoxy-D-xylulose-5-phosphate synthase, found in Bordetella pertussis (strain Tohama I / ATCC BAA-589 / NCTC 13251).